Reading from the N-terminus, the 877-residue chain is DNA mismatch repair protein MutS (877 aa).

Position 627-634 (627-634) interacts with ATP; that stretch reads GPNMAGKS.

Belongs to the DNA mismatch repair MutS family.

In terms of biological role, this protein is involved in the repair of mismatches in DNA. It is possible that it carries out the mismatch recognition step. This protein has a weak ATPase activity. The polypeptide is DNA mismatch repair protein MutS (Dinoroseobacter shibae (strain DSM 16493 / NCIMB 14021 / DFL 12)).